Reading from the N-terminus, the 49-residue chain is Large ribosomal subunit protein bL33A (49 aa).

The protein belongs to the bacterial ribosomal protein bL33 family.

The chain is Large ribosomal subunit protein bL33A from Staphylococcus saprophyticus subsp. saprophyticus (strain ATCC 15305 / DSM 20229 / NCIMB 8711 / NCTC 7292 / S-41).